Consider the following 220-residue polypeptide: Iron-sulfur cluster repair protein YtfE (220 aa).

This sequence belongs to the RIC family. YtfE subfamily. As to quaternary structure, homodimer.

It localises to the cytoplasm. Di-iron-containing protein involved in the repair of iron-sulfur clusters damaged by oxidative and nitrosative stress conditions. The polypeptide is Iron-sulfur cluster repair protein YtfE (Escherichia coli O8 (strain IAI1)).